The sequence spans 787 residues: LPS-assembly protein LptD (787 aa).

The N-terminal stretch at 1 to 39 (MPRKTLLPLVPACDAAPRRKRLAAALLAVPGLVPAVSQA) is a signal peptide.

The protein belongs to the LptD family. As to quaternary structure, component of the lipopolysaccharide transport and assembly complex. Interacts with LptE and LptA.

It is found in the cell outer membrane. Its function is as follows. Together with LptE, is involved in the assembly of lipopolysaccharide (LPS) at the surface of the outer membrane. This is LPS-assembly protein LptD from Burkholderia thailandensis (strain ATCC 700388 / DSM 13276 / CCUG 48851 / CIP 106301 / E264).